A 231-amino-acid chain; its full sequence is Small ribosomal subunit protein uS3 (231 aa).

Residues 39–107 form the KH type-2 domain; that stretch reads IRKHIMKAIP…DVSLNIVEIR (69 aa).

It belongs to the universal ribosomal protein uS3 family. In terms of assembly, part of the 30S ribosomal subunit. Forms a tight complex with proteins S10 and S14.

Binds the lower part of the 30S subunit head. Binds mRNA in the 70S ribosome, positioning it for translation. The chain is Small ribosomal subunit protein uS3 from Rhizorhabdus wittichii (strain DSM 6014 / CCUG 31198 / JCM 15750 / NBRC 105917 / EY 4224 / RW1) (Sphingomonas wittichii).